We begin with the raw amino-acid sequence, 439 residues long: uncharacterized protein (439 aa).

3 disordered regions span residues 1-36 (MRPG…SKQA), 126-157 (SRTG…GVPI), and 411-439 (FRSD…AVPR).

This is an uncharacterized protein from Streptomyces fradiae (Streptomyces roseoflavus).